Reading from the N-terminus, the 2462-residue chain is Serine/threonine-protein kinase Wnk (2462 aa).

Disordered regions lie at residues 18 to 133, 146 to 248, and 365 to 461; these read NRAR…ASKS, NTLP…KSSS, and EDDV…DDDP. Composition is skewed to polar residues over residues 29–58 and 65–78; these read DGTT…NIQK and NRSA…NPTS. The span at 94–124 shows a compositional bias: low complexity; that stretch reads TLSAHTSTSSTTSIQSSPIEPASSLPTLNTT. Positions 146-155 are enriched in polar residues; it reads NTLPGKTASS. 3 stretches are compositionally biased toward basic and acidic residues: residues 190-205, 237-247, and 396-413; these read QSRE…KIEP, DTKKMEARKSS, and QSEK…KAES. Low complexity predominate over residues 414 to 452; sequence SEASAEEAAVTGSSTDASASPLPSTSLVSTTSSATSITK. Residues 471-729 enclose the Protein kinase domain; it reads FKYDKEVGRG…CNELLESEFF (259 aa). ATP contacts are provided by residues serine 481, 551-554, and lysine 601; that span reads TELM. Aspartate 618 acts as the Proton acceptor in catalysis. A phosphoserine; by autocatalysis mark is found at serine 628 and serine 632. Disordered stretches follow at residues 844 to 873, 893 to 923, and 1006 to 1055; these read LQKQ…DGVK, LALS…QPVQ, and PQQQ…LQQQ. Positions 855–870 are enriched in acidic residues; the sequence is VDEDEEEEEESEDEED. A compositionally biased stretch (polar residues) spans 893–918; the sequence is LALSTNSVEPQQLSTRSNTSIPNSGI. Low complexity-rich tracts occupy residues 1006-1034 and 1041-1055; these read PQQQ…QPQT and HEQQ…LQQQ. A coiled-coil region spans residues 1142–1178; the sequence is AQHQLQQLQQQQLQQQQLQQQQQIQQQQLQQQQLQQQ. Residues 1236–1251 are compositionally biased toward polar residues; sequence QGGQVTLSDAQQQQHP. Disordered stretches follow at residues 1236–1256, 1322–1382, 1418–1465, 1554–1578, 1615–1699, 1762–1790, 1828–1895, 1929–1966, and 2122–2229; these read QGGQ…FSAV, QQQQ…EQIS, GALE…PKLS, LTRQ…SDIT, NIPN…KDKK, DTSE…GNQG, QASP…SVGS, HEKQ…SINQ, and THVQ…FIQS. Residues 1559–1568 show a composition bias toward basic residues; that stretch reads STFRSHQRHR. Low complexity predominate over residues 1627 to 1641; that stretch reads STPPTTTSTMSSSST. Polar residues predominate over residues 1642 to 1674; that stretch reads ASRDAPNSSNDVTIGSGSVSRKTSTASEYTSLS. 3 stretches are compositionally biased toward polar residues: residues 1828 to 1852, 1861 to 1894, and 1943 to 1966; these read QASP…TKPN, SVGQ…NSVG, and SATS…SINQ. Residues 2125-2136 show a composition bias toward low complexity; that stretch reads QQPSNLQPQQQS. The segment covering 2137 to 2160 has biased composition (polar residues); the sequence is VHPNMTQQPQQTPLNGHPSMVNTL. Residues 2161–2211 show a composition bias toward low complexity; sequence QQQPPQQSLPMQTIQSQQQQHNQMPIISQQQQQQILMQQQQQQGSQQGSQQ. The span at 2212–2229 shows a compositional bias: polar residues; the sequence is FNLPGTQQTHPQHQFIQS.

Belongs to the protein kinase superfamily. Ser/Thr protein kinase family. WNK subfamily. The cofactor is Mg(2+). In terms of processing, autophosphorylated. Autophosphorylation at Ser-628 and Ser-632 promotes its activity.

The protein resides in the cytoplasm. It carries out the reaction L-seryl-[protein] + ATP = O-phospho-L-seryl-[protein] + ADP + H(+). The enzyme catalyses L-threonyl-[protein] + ATP = O-phospho-L-threonyl-[protein] + ADP + H(+). Activated in response to hyperosmotic stress: cell shrinkage promotes formation of a membraneless compartment that concentrates wnk-1 with its downstrem substrates. Activation requires autophosphorylation. Autophosphorylation and subsequent activation is inhibited by increases in intracellular Cl(-) or K(+). Its function is as follows. Serine/threonine-protein kinase component of the WNK-SPAK/OSR1 kinase cascade, which plays an important role in the regulation of electrolyte homeostasis and regulatory volume increase in response to hyperosmotic stress. Wnk mediates regulatory volume increase in response to hyperosmotic stress by acting as a molecular crowding sensor, which senses cell shrinkage and mediates formation of a membraneless compartment by undergoing liquid-liquid phase separation. The membraneless compartment concentrates Wnk with its substrate Fray, promoting Wnk-dependent phosphorylation and activation of downstream kinase Fray. Following activation, Fray catalyzes phosphorylation of ion cotransporters Ncc69 and Irk1, regulating their activity. Phosphorylation of Na-K-Cl cotransporter Ncc69 promotes its activation and ion influx. Involved in circadian rhythms in small ventral lateral (sLNv) pacemaker neurons: in the morning, Wnk activity is repressed by high levels of intracellular chloride; in contrast Wnk activation in the evening promotes the activation of the inwardly rectifying potassium channel Irk1 via Fray. Acts as a positive regulator of the canonical Wnt signaling pathway during wing disk development. The sequence is that of Serine/threonine-protein kinase Wnk from Drosophila melanogaster (Fruit fly).